The primary structure comprises 336 residues: DNA-directed RNA polymerase subunit alpha (336 aa).

The interval 1-226 is alpha N-terminal domain (alpha-NTD); that stretch reads MLIAQRPTLS…ELFGLARELN (226 aa). The tract at residues 241–336 is alpha C-terminal domain (alpha-CTD); it reads AALAADMALP…DDAAFSDDEL (96 aa).

This sequence belongs to the RNA polymerase alpha chain family. In terms of assembly, homodimer. The RNAP catalytic core consists of 2 alpha, 1 beta, 1 beta' and 1 omega subunit. When a sigma factor is associated with the core the holoenzyme is formed, which can initiate transcription.

The catalysed reaction is RNA(n) + a ribonucleoside 5'-triphosphate = RNA(n+1) + diphosphate. DNA-dependent RNA polymerase catalyzes the transcription of DNA into RNA using the four ribonucleoside triphosphates as substrates. This is DNA-directed RNA polymerase subunit alpha from Paenarthrobacter aurescens (strain TC1).